A 65-amino-acid polypeptide reads, in one-letter code: Hirudin-3A (65 aa).

Positions 1–3 (VVY) are interaction with thrombin active site. 3 disulfide bridges follow: Cys-6–Cys-14, Cys-16–Cys-28, and Cys-22–Cys-39. The tract at residues 39 to 65 (CVTGEGTPKPQSHNDGDFEEIPEEYLQ) is disordered. Thr-45 carries an O-linked (GalNAc...) threonine glycan. Positions 55-65 (DFEEIPEEYLQ) are interaction with fibrinogen-binding exosite of thrombin. The span at 55–65 (DFEEIPEEYLQ) shows a compositional bias: acidic residues. The residue at position 63 (Tyr-63) is a Sulfotyrosine.

Belongs to the protease inhibitor I14 (hirudin) family.

Its subcellular location is the secreted. In terms of biological role, hirudin is a potent thrombin-specific protease inhibitor. It forms a stable non-covalent complex with alpha-thrombin, thereby abolishing its ability to cleave fibrinogen. The chain is Hirudin-3A from Hirudo medicinalis (Medicinal leech).